Here is a 607-residue protein sequence, read N- to C-terminus: UvrABC system protein C (607 aa).

Residues 19 to 97 form the GIY-YIG domain; it reads TLSGVYQMRD…IKQYQPKFNI (79 aa). The region spanning 205 to 240 is the UVR domain; it reads EHLLQTLTEHMLQASAAQQYERAAIVRDQISELRTI.

The protein belongs to the UvrC family. In terms of assembly, interacts with UvrB in an incision complex.

Its subcellular location is the cytoplasm. In terms of biological role, the UvrABC repair system catalyzes the recognition and processing of DNA lesions. UvrC both incises the 5' and 3' sides of the lesion. The N-terminal half is responsible for the 3' incision and the C-terminal half is responsible for the 5' incision. This Dichelobacter nodosus (strain VCS1703A) protein is UvrABC system protein C.